The following is a 225-amino-acid chain: Lipoprotein CseA (225 aa).

The first 36 residues, 1–36 (MRGLTDGRTPRGTRRTTQAASTAVAVFVALGVSLAG), serve as a signal peptide directing secretion. Residue cysteine 37 is the site of N-palmitoyl cysteine attachment. Cysteine 37 is lipidated: S-diacylglycerol cysteine. Disordered stretches follow at residues 40–77 (GGTG…APDR) and 205–225 (THND…EPDS). The segment covering 60–73 (SASPAPAAKASPSK) has biased composition (low complexity).

It is found in the cell membrane. In terms of biological role, may be involved in the stabilization of the cell envelope or may interact with the sensor protein CseC to modulate its activity, in response to cell envelope stress. This Streptomyces coelicolor (strain ATCC BAA-471 / A3(2) / M145) protein is Lipoprotein CseA (cseA).